Reading from the N-terminus, the 67-residue chain is MKTNELRNLTTAEIEQKTKSLKEELFNLRFQLATGQLDNPTRIREVRKNIARAKTVLRERELGINNG.

This sequence belongs to the universal ribosomal protein uL29 family.

The chain is Large ribosomal subunit protein uL29 (rpmC) from Halalkalibacterium halodurans (strain ATCC BAA-125 / DSM 18197 / FERM 7344 / JCM 9153 / C-125) (Bacillus halodurans).